Consider the following 278-residue polypeptide: Elongation factor Ts (278 aa).

Positions 81-84 (TDFV) are involved in Mg(2+) ion dislocation from EF-Tu.

The protein belongs to the EF-Ts family.

Its subcellular location is the cytoplasm. Functionally, associates with the EF-Tu.GDP complex and induces the exchange of GDP to GTP. It remains bound to the aminoacyl-tRNA.EF-Tu.GTP complex up to the GTP hydrolysis stage on the ribosome. The chain is Elongation factor Ts from Thermobifida fusca (strain YX).